Reading from the N-terminus, the 396-residue chain is Putative nickel insertion protein (396 aa).

The protein belongs to the LarC family.

This chain is Putative nickel insertion protein, found in Methanosarcina barkeri (strain Fusaro / DSM 804).